The primary structure comprises 246 residues: Protein DEHYDRATION-INDUCED 19 homolog 3 (246 aa).

Positions 185-230 (ERSKAPVPIPDDTSIHKDTPAQPWESRIDSSLTSEEREQKRKQATD) are disordered. The span at 218-229 (SEEREQKRKQAT) shows a compositional bias: basic and acidic residues.

This sequence belongs to the Di19 family.

This chain is Protein DEHYDRATION-INDUCED 19 homolog 3 (DI19-3), found in Oryza sativa subsp. japonica (Rice).